The primary structure comprises 158 residues: Ankyrin repeat domain-containing protein 37 (158 aa).

ANK repeat units lie at residues 1 to 25 (MLLLDCNPEVDSLKHLLETGASVNA), 30 to 59 (CEQSPVHLAAGGGLACFLLWQLQTGADLNQ), and 63 to 92 (FGEAPLHKAARVGSMECLSLLVASDAQIDL). A Nuclear localization signal motif is present at residues 129–149 (EQPNKDHCVQVLRLKRSFGSE).

Ubiquitinated by the CRL2(FEM1B) complex, leading to its degradation.

The protein resides in the nucleus. It localises to the cytoplasm. In Bos taurus (Bovine), this protein is Ankyrin repeat domain-containing protein 37 (ANKRD37).